Consider the following 634-residue polypeptide: DNA-directed RNA polymerase subunit gamma (634 aa).

Residues Cys74, Cys76, Cys89, and Cys92 each coordinate Zn(2+). Mg(2+) is bound by residues Asp471, Asp473, and Asp475.

This sequence belongs to the RNA polymerase beta' chain family. RpoC1 subfamily. In cyanobacteria the RNAP catalytic core is composed of 2 alpha, 1 beta, 1 beta', 1 gamma and 1 omega subunit. When a sigma factor is associated with the core the holoenzyme is formed, which can initiate transcription. Mg(2+) is required as a cofactor. Requires Zn(2+) as cofactor.

The enzyme catalyses RNA(n) + a ribonucleoside 5'-triphosphate = RNA(n+1) + diphosphate. In terms of biological role, DNA-dependent RNA polymerase catalyzes the transcription of DNA into RNA using the four ribonucleoside triphosphates as substrates. In Synechococcus sp. (strain CC9605), this protein is DNA-directed RNA polymerase subunit gamma.